A 72-amino-acid polypeptide reads, in one-letter code: Toxin Acra II-2 (72 aa).

Positions 3-67 constitute an LCN-type CS-alpha/beta domain; sequence VPGNYPLNTN…VWNAAKNYCK (65 aa). Disulfide bonds link cysteine 18/cysteine 41, cysteine 27/cysteine 46, and cysteine 31/cysteine 48.

Belongs to the long (3 C-C) scorpion toxin superfamily. Sodium channel inhibitor family. Beta subfamily. Expressed by the venom gland.

The protein resides in the secreted. In terms of biological role, binds to sodium channels (Nav) and affects the channel activation process. The chain is Toxin Acra II-2 from Androctonus crassicauda (Arabian fat-tailed scorpion).